The following is a 377-amino-acid chain: tRNA-specific 2-thiouridylase MnmA (377 aa).

ATP contacts are provided by residues alanine 18 to serine 25 and methionine 44. The active-site Nucleophile is cysteine 113. Cysteine 113 and cysteine 210 are joined by a disulfide. Residue glycine 137 participates in ATP binding. The tract at residues arginine 159–glutamine 161 is interaction with tRNA. The Cysteine persulfide intermediate role is filled by cysteine 210.

Belongs to the MnmA/TRMU family.

Its subcellular location is the cytoplasm. The enzyme catalyses S-sulfanyl-L-cysteinyl-[protein] + uridine(34) in tRNA + AH2 + ATP = 2-thiouridine(34) in tRNA + L-cysteinyl-[protein] + A + AMP + diphosphate + H(+). Functionally, catalyzes the 2-thiolation of uridine at the wobble position (U34) of tRNA, leading to the formation of s(2)U34. The protein is tRNA-specific 2-thiouridylase MnmA of Rhodospirillum rubrum (strain ATCC 11170 / ATH 1.1.1 / DSM 467 / LMG 4362 / NCIMB 8255 / S1).